Consider the following 280-residue polypeptide: Protein FAM131C (280 aa).

Residues 195-280 are disordered; it reads QDSLPSGPSQ…LWEEDEVFYN (86 aa). The span at 197–211 shows a compositional bias: polar residues; that stretch reads SLPSGPSQDDSLQAF. The span at 215-227 shows a compositional bias: pro residues; sequence SPSPDSCPSPEEP.

The protein belongs to the FAM131 family.

The polypeptide is Protein FAM131C (FAM131C) (Homo sapiens (Human)).